The chain runs to 153 residues: Ribosomal RNA large subunit methyltransferase H (153 aa).

Residues leucine 70, glycine 102, and leucine 121–phenylalanine 126 contribute to the S-adenosyl-L-methionine site.

It belongs to the RNA methyltransferase RlmH family. In terms of assembly, homodimer.

The protein localises to the cytoplasm. The catalysed reaction is pseudouridine(1915) in 23S rRNA + S-adenosyl-L-methionine = N(3)-methylpseudouridine(1915) in 23S rRNA + S-adenosyl-L-homocysteine + H(+). In terms of biological role, specifically methylates the pseudouridine at position 1915 (m3Psi1915) in 23S rRNA. The sequence is that of Ribosomal RNA large subunit methyltransferase H from Geotalea uraniireducens (strain Rf4) (Geobacter uraniireducens).